Reading from the N-terminus, the 464-residue chain is FERM domain-containing protein 8 (464 aa).

An N-acetylmethionine modification is found at Met-1. Residues 1–22 form a disordered region; sequence MDGTEGSAGQPGPAERSHRSSV. Ser-24 carries the post-translational modification Phosphoserine. The 347-residue stretch at 30–376 folds into the FERM domain; the sequence is ADVLVYLADD…YCIELSQAAE (347 aa). Residues 376-408 form a disordered region; that stretch reads EPAGPQDSATGSPSDPSSSLAPVQRPKLRRQGS. Phosphoserine occurs at positions 383, 387, and 408. Thr-419 carries the phosphothreonine modification. A phosphoserine mark is found at Ser-439 and Ser-446.

As to quaternary structure, interacts with iRhom1/RHBDF1 and iRhom2/RHBDF2 (via cytoplasmic N-termini); this interaction leads to mutual protein stabilization. Interacts with ADAM17; this interaction is indirect and mediated by iRhom proteins. Interacts with LRP6; this interaction affects LRP6-binding to AXIN1. In terms of tissue distribution, widely expressed, with high expression in heart and spleen.

The protein resides in the cytoplasm. It localises to the cytosol. The protein localises to the cell membrane. In terms of biological role, promotes the cell surface stability of iRhom1/RHBDF1 and iRhom2/RHBDF2 and prevents their degradation via the endolysosomal pathway. By acting on iRhoms, involved in ADAM17-mediated shedding of TNF, amphiregulin/AREG, HBEGF and TGFA from the cell surface. Negatively regulates Wnt signaling, possibly by antagonizing the recruitment of AXIN1 to LRP6. This chain is FERM domain-containing protein 8 (FRMD8), found in Homo sapiens (Human).